Here is a 126-residue protein sequence, read N- to C-terminus: Probable small nuclear ribonucleoprotein Sm D1 (126 aa).

The region spanning 2 to 74 is the Sm domain; it reads KLVRFLMKLS…IRYIILPDPL (73 aa). Residues 86-126 form a disordered region; it reads RKKARAARAGASRGRGRGGMRGGRGGRGRGRGGPRGGGPRR. The segment covering 99–126 has biased composition (basic residues); that stretch reads GRGRGGMRGGRGGRGRGRGGPRGGGPRR.

This sequence belongs to the snRNP core protein family.

It is found in the nucleus. Its subcellular location is the cytoplasm. It localises to the cytosol. Functionally, plays a role in pre-mRNA splicing as a core component of the spliceosomal U1, U2, U4 and U5 small nuclear ribonucleoproteins (snRNPs), the building blocks of the spliceosome. The polypeptide is Probable small nuclear ribonucleoprotein Sm D1 (snr-3) (Caenorhabditis elegans).